The chain runs to 975 residues: Translation initiation factor IF-2 (975 aa).

The segment covering Asp-48–Lys-63 has biased composition (basic and acidic residues). 2 disordered regions span residues Asp-48 to Arg-84 and Lys-98 to Thr-388. The span at Glu-104–Asp-115 shows a compositional bias: low complexity. The span at Ala-120 to Ala-177 shows a compositional bias: basic and acidic residues. The span at Lys-178–Gln-211 shows a compositional bias: low complexity. Residues Asp-212–Arg-263 are compositionally biased toward basic and acidic residues. Low complexity predominate over residues Lys-302–Gly-330. Gly residues predominate over residues Ser-359–Lys-372. A tr-type G domain is found at Pro-475–Lys-644. A G1 region spans residues Gly-484–Thr-491. A GTP-binding site is contributed by Gly-484–Thr-491. The tract at residues Gly-509–His-513 is G2. A G3 region spans residues Asp-530 to Gly-533. GTP contacts are provided by residues Asp-530–His-534 and Asn-584–Asp-587. Positions Asn-584–Asp-587 are G4. The G5 stretch occupies residues Ser-620–Lys-622.

It belongs to the TRAFAC class translation factor GTPase superfamily. Classic translation factor GTPase family. IF-2 subfamily.

The protein resides in the cytoplasm. One of the essential components for the initiation of protein synthesis. Protects formylmethionyl-tRNA from spontaneous hydrolysis and promotes its binding to the 30S ribosomal subunits. Also involved in the hydrolysis of GTP during the formation of the 70S ribosomal complex. The polypeptide is Translation initiation factor IF-2 (Burkholderia mallei (strain NCTC 10247)).